A 343-amino-acid chain; its full sequence is Replication initiation protein (343 aa).

The interval 42-61 (ERKRTKRRRGEHSTKPKCEN) is disordered.

Its function is as follows. Probably functions as an initiator for the IncI1 ColIb-P9 replicon. This chain is Replication initiation protein (repZ), found in Escherichia coli.